The primary structure comprises 608 residues: Microtubule-associated protein 70-3 (608 aa).

The interval 1–23 is disordered; sequence MADGVEEGNAVAPRGPARRRGTV. Residues 40–346 are a coiled coil; the sequence is DPVRVELTRL…ARSEAQLKEK (307 aa). The tract at residues 224 to 458 is required for targeting to microtubules; sequence ILDKLQRQKV…HLLNRSTDAV (235 aa). Disordered stretches follow at residues 354–493 and 570–608; these read LEDG…TANN and DKEQ…RNYQ. The segment covering 363-379 has biased composition (polar residues); that stretch reads SGSSRLPTEGKSFSNGP. The segment covering 402–421 has biased composition (low complexity); that stretch reads RRSPSFHSRSSLSSSSSLVL. The segment covering 476-493 has biased composition (polar residues); that stretch reads IENTNSNTDESNKETANN. A coiled-coil region spans residues 542–576; that stretch reads LTKAMEVEAKKMRREVAAMEKEVAAMRVDKEQEVK. The span at 586-608 shows a compositional bias: low complexity; it reads TGSSQVLSGSRSSSRSGLTRNYQ.

Belongs to the MAP70 family.

The protein localises to the cytoplasm. The protein resides in the cytoskeleton. Functionally, plant-specific protein that interact with microtubules. The sequence is that of Microtubule-associated protein 70-3 (MAP70.3) from Oryza sativa subsp. japonica (Rice).